We begin with the raw amino-acid sequence, 483 residues long: MORN repeat-containing protein 1 (483 aa).

A Phosphoserine modification is found at Ser18. MORN repeat units follow at residues 39 to 61 (YEGE…DGSY), 62 to 84 (YEGE…WSGN), 86 to 108 (YSGQ…AGGH), 109 to 131 (YEGE…DGQV), 132 to 154 (YQGS…NGDK), 155 to 177 (YEGD…DGST), and 178 to 200 (YKGQ…SGVT). Residues 392 to 427 (EKAGNRPKGDRSPPEVLSTAQEPLRGTNRSDGTTAE) form a disordered region. A compositionally biased stretch (basic and acidic residues) spans 394–404 (AGNRPKGDRSP). At Ser403 the chain carries Phosphoserine. A compositionally biased stretch (polar residues) spans 418–427 (TNRSDGTTAE).

The protein is MORN repeat-containing protein 1 (Morn1) of Rattus norvegicus (Rat).